Consider the following 351-residue polypeptide: Serine protease inhibitor dipetalogastin (351 aa).

Residues 1-131 constitute a propeptide that is removed on maturation; the sequence is LIKELVNMVI…AETTNAMEVL (131 aa). Kazal-like domains follow at residues 19-69, 72-122, 131-181, 184-234, 240-289, and 297-347; these read KELK…PCDE, HDFE…ECHA, LFQG…PCDE, HDFE…ECHP, QLIL…ECKV, and GEVR…RCLP. Cystine bridges form between Cys25/Cys50, Cys27/Cys46, Cys35/Cys67, Cys78/Cys103, Cys80/Cys99, Cys88/Cys120, Cys137/Cys162, Cys139/Cys158, Cys147/Cys179, Cys190/Cys215, Cys192/Cys211, Cys200/Cys232, Cys246/Cys271, Cys248/Cys267, Cys256/Cys287, Cys303/Cys328, Cys305/Cys324, and Cys313/Cys345.

Its subcellular location is the secreted. In terms of biological role, thrombin inhibitor. Prevents blood clotting to allow insect to feed on blood. Also functions as an inhibitor of trypsin and plasmin. In Dipetalogaster maximus (Blood-sucking bug), this protein is Serine protease inhibitor dipetalogastin.